We begin with the raw amino-acid sequence, 480 residues long: Amino acid permease 5 (480 aa).

The disordered stretch occupies residues 1 to 25 (MVVQNVQDLDVLPKHSSDSFDDDGR). The Cytoplasmic segment spans residues 1–31 (MVVQNVQDLDVLPKHSSDSFDDDGRPKRTGT). A compositionally biased stretch (basic and acidic residues) spans 11-25 (VLPKHSSDSFDDDGR). The next 2 membrane-spanning stretches (helical) occupy residues 32-52 (VWTA…LSLA) and 53-73 (WAVA…FSFV). The Cytoplasmic segment spans residues 74-120 (TFYTSTLLCSCYRSGDSVTGKRNYTYMDAIHSNLGGIKVKVCGVVQY). The helical transmembrane segment at 121–141 (VNLFGTAIGYTIASAISLVAI) threads the bilayer. Residues 142-157 (QRTSCQQMNGPNDPCH) lie on the Extracellular side of the membrane. The chain crosses the membrane as a helical span at residues 158–178 (VNGNVYMIAFGIVQIIFSQIP). Residues 179–182 (DFDQ) are Cytoplasmic-facing. The chain crosses the membrane as a helical span at residues 183–203 (LWWLSIVAAVMSFAYSAIGLG). Topologically, residues 204 to 241 (LGVSKVVENKEIKGSLTGVTVGTVTLSGTVTSSQKIWR) are extracellular. A helical transmembrane segment spans residues 242–262 (TFQSLGNIAFAYSYSMILIEI). Over 263–280 (QDTVKSPPAEVNTMRKAT) the chain is Cytoplasmic. The chain crosses the membrane as a helical span at residues 281-301 (FVSVAVTTVFYMLCGCVGYAA). Topologically, residues 302–328 (FGDNAPGNLLAHGGFRNPYWLLDIANL) are extracellular. Residues 329 to 349 (AIVIHLVGAYQVYCQPLFAFV) traverse the membrane as a helical segment. Residues 350–383 (EKEASRRFPESEFVTKEIKIQLFPGKPFNLNLFR) are Cytoplasmic-facing. The chain crosses the membrane as a helical span at residues 384-404 (LVWRTFFVMTTTLISMLMPFF). The Extracellular portion of the chain corresponds to 405–406 (ND). Residues 407 to 427 (VVGLLGAIGFWPLTVYFPVEM) traverse the membrane as a helical segment. At 428–445 (YIAQKNVPRWGTKWVCLQ) the chain is on the cytoplasmic side. Residues 446 to 466 (VLSVTCLFVSVAAAAGSVIGI) form a helical membrane-spanning segment. Residues 467 to 480 (VSDLKVYKPFQSEF) are Extracellular-facing.

The protein belongs to the amino acid/polyamine transporter 2 family. Amino acid/auxin permease (AAAP) (TC 2.A.18.2) subfamily. In terms of tissue distribution, expressed in leaves, stems, roots, siliques and flowers.

The protein localises to the cell membrane. Its activity is regulated as follows. Inhibited by 2,4-dinitrophenol. Functionally, amino acid-proton symporter. Stereospecific transporter with a broad specificity for glutamate and both neutral and basic amino acids. Reduced affinities for asparagine and valine. High affinity transport of the cationic amino acids arginine and lysine, but not of histidine. The chain is Amino acid permease 5 (AAP5) from Arabidopsis thaliana (Mouse-ear cress).